The following is a 765-amino-acid chain: Phosphoribosylformylglycinamidine synthase subunit PurL (765 aa).

Residue histidine 57 is part of the active site. Tyrosine 60 and arginine 104 together coordinate ATP. Mg(2+) is bound at residue glutamate 106. Substrate is bound by residues 107 to 110 (SHNH) and arginine 129. Residue histidine 108 is the Proton acceptor of the active site. Position 130 (aspartate 130) interacts with Mg(2+). Position 254 (glutamine 254) interacts with substrate. Mg(2+) is bound at residue aspartate 282. Substrate is bound at residue 326–328 (ESQ). ATP contacts are provided by asparagine 508 and glycine 545. Asparagine 546 contacts Mg(2+). Serine 548 lines the substrate pocket.

Belongs to the FGAMS family. Monomer. Part of the FGAM synthase complex composed of 1 PurL, 1 PurQ and 2 PurS subunits.

Its subcellular location is the cytoplasm. The catalysed reaction is N(2)-formyl-N(1)-(5-phospho-beta-D-ribosyl)glycinamide + L-glutamine + ATP + H2O = 2-formamido-N(1)-(5-O-phospho-beta-D-ribosyl)acetamidine + L-glutamate + ADP + phosphate + H(+). The protein operates within purine metabolism; IMP biosynthesis via de novo pathway; 5-amino-1-(5-phospho-D-ribosyl)imidazole from N(2)-formyl-N(1)-(5-phospho-D-ribosyl)glycinamide: step 1/2. Functionally, part of the phosphoribosylformylglycinamidine synthase complex involved in the purines biosynthetic pathway. Catalyzes the ATP-dependent conversion of formylglycinamide ribonucleotide (FGAR) and glutamine to yield formylglycinamidine ribonucleotide (FGAM) and glutamate. The FGAM synthase complex is composed of three subunits. PurQ produces an ammonia molecule by converting glutamine to glutamate. PurL transfers the ammonia molecule to FGAR to form FGAM in an ATP-dependent manner. PurS interacts with PurQ and PurL and is thought to assist in the transfer of the ammonia molecule from PurQ to PurL. This chain is Phosphoribosylformylglycinamidine synthase subunit PurL, found in Corynebacterium aurimucosum (strain ATCC 700975 / DSM 44827 / CIP 107346 / CN-1) (Corynebacterium nigricans).